The chain runs to 639 residues: 1-deoxy-D-xylulose-5-phosphate synthase (639 aa).

Thiamine diphosphate contacts are provided by residues histidine 79 and alanine 120–serine 122. Position 151 (aspartate 151) interacts with Mg(2+). Residues glycine 152 to alanine 153, asparagine 180, tyrosine 289, and glutamate 371 contribute to the thiamine diphosphate site. Asparagine 180 contacts Mg(2+).

The protein belongs to the transketolase family. DXPS subfamily. Homodimer. Mg(2+) serves as cofactor. It depends on thiamine diphosphate as a cofactor.

It carries out the reaction D-glyceraldehyde 3-phosphate + pyruvate + H(+) = 1-deoxy-D-xylulose 5-phosphate + CO2. It functions in the pathway metabolic intermediate biosynthesis; 1-deoxy-D-xylulose 5-phosphate biosynthesis; 1-deoxy-D-xylulose 5-phosphate from D-glyceraldehyde 3-phosphate and pyruvate: step 1/1. Its function is as follows. Catalyzes the acyloin condensation reaction between C atoms 2 and 3 of pyruvate and glyceraldehyde 3-phosphate to yield 1-deoxy-D-xylulose-5-phosphate (DXP). The chain is 1-deoxy-D-xylulose-5-phosphate synthase from Allorhizobium ampelinum (strain ATCC BAA-846 / DSM 112012 / S4) (Agrobacterium vitis (strain S4)).